Consider the following 478-residue polypeptide: V-type ATP synthase beta chain (478 aa).

Belongs to the ATPase alpha/beta chains family.

Functionally, produces ATP from ADP in the presence of a proton gradient across the membrane. The V-type beta chain is a regulatory subunit. The polypeptide is V-type ATP synthase beta chain (Thermus thermophilus (strain ATCC BAA-163 / DSM 7039 / HB27)).